We begin with the raw amino-acid sequence, 514 residues long: Proline--tRNA ligase (514 aa).

This sequence belongs to the class-II aminoacyl-tRNA synthetase family. ProS type 3 subfamily. In terms of assembly, homodimer.

It localises to the cytoplasm. It catalyses the reaction tRNA(Pro) + L-proline + ATP = L-prolyl-tRNA(Pro) + AMP + diphosphate. Functionally, catalyzes the attachment of proline to tRNA(Pro) in a two-step reaction: proline is first activated by ATP to form Pro-AMP and then transferred to the acceptor end of tRNA(Pro). This is Proline--tRNA ligase from Erythrobacter litoralis (strain HTCC2594).